We begin with the raw amino-acid sequence, 319 residues long: ATP-dependent 6-phosphofructokinase (319 aa).

Gly11 lines the ATP pocket. 21 to 25 serves as a coordination point for ADP; the sequence is RAVVR. Residues 72 to 73 and 102 to 105 each bind ATP; these read RC and GDGS. Residue Asp103 participates in Mg(2+) binding. 125 to 127 provides a ligand contact to substrate; sequence TID. Asp127 serves as the catalytic Proton acceptor. Position 154 (Arg154) interacts with ADP. Substrate is bound by residues Arg162 and 169-171; that span reads MGR. Residues 185-187, Arg211, and 213-215 each bind ADP; these read GAE and KRH. Residues Glu222, Arg243, and 249 to 252 each bind substrate; that span reads HVQR.

This sequence belongs to the phosphofructokinase type A (PFKA) family. ATP-dependent PFK group I subfamily. Prokaryotic clade 'B1' sub-subfamily. As to quaternary structure, homotetramer. Mg(2+) serves as cofactor.

It is found in the cytoplasm. It catalyses the reaction beta-D-fructose 6-phosphate + ATP = beta-D-fructose 1,6-bisphosphate + ADP + H(+). Its pathway is carbohydrate degradation; glycolysis; D-glyceraldehyde 3-phosphate and glycerone phosphate from D-glucose: step 3/4. Its activity is regulated as follows. Allosterically activated by ADP and other diphosphonucleosides, and allosterically inhibited by phosphoenolpyruvate. Its function is as follows. Catalyzes the phosphorylation of D-fructose 6-phosphate to fructose 1,6-bisphosphate by ATP, the first committing step of glycolysis. The protein is ATP-dependent 6-phosphofructokinase of Clostridioides difficile (strain 630) (Peptoclostridium difficile).